The chain runs to 365 residues: Sesquiterpene synthase 3 (365 aa).

Mg(2+) is bound by residues Asp-117, Asn-253, Ser-257, and Glu-261. The DDXXD motif motif lies at 117–121 (DDWSD). The NSE/DTE motif signature appears at 253-261 (NDILSYNRE). Residues Arg-341 and Tyr-342 each coordinate (2E,6E)-farnesyl diphosphate.

Belongs to the terpene synthase family. Mg(2+) is required as a cofactor.

It catalyses the reaction (2E,6E)-farnesyl diphosphate = delta-cadinene + diphosphate. In terms of biological role, terpene cyclase that catalyzes the cyclization of farnesyl diphosphate (FPP) to various sesquiterpenes, including beta-elemene gamma-cadinene, delta-cadinene, and alpha-cadinene. The sequence is that of Sesquiterpene synthase 3 from Postia placenta (strain ATCC 44394 / Madison 698-R) (Brown rot fungus).